We begin with the raw amino-acid sequence, 631 residues long: Glutamyl-tRNA(Gln) amidotransferase subunit E (631 aa).

This sequence belongs to the GatB/GatE family. GatE subfamily. Heterodimer of GatD and GatE.

It catalyses the reaction L-glutamyl-tRNA(Gln) + L-glutamine + ATP + H2O = L-glutaminyl-tRNA(Gln) + L-glutamate + ADP + phosphate + H(+). In terms of biological role, allows the formation of correctly charged Gln-tRNA(Gln) through the transamidation of misacylated Glu-tRNA(Gln) in organisms which lack glutaminyl-tRNA synthetase. The reaction takes place in the presence of glutamine and ATP through an activated gamma-phospho-Glu-tRNA(Gln). The GatDE system is specific for glutamate and does not act on aspartate. In Methanococcus maripaludis (strain C5 / ATCC BAA-1333), this protein is Glutamyl-tRNA(Gln) amidotransferase subunit E.